A 305-amino-acid polypeptide reads, in one-letter code: Methionyl-tRNA formyltransferase (305 aa).

Residue 111 to 114 participates in (6S)-5,6,7,8-tetrahydrofolate binding; it reads SLLP.

It belongs to the Fmt family.

The enzyme catalyses L-methionyl-tRNA(fMet) + (6R)-10-formyltetrahydrofolate = N-formyl-L-methionyl-tRNA(fMet) + (6S)-5,6,7,8-tetrahydrofolate + H(+). In terms of biological role, attaches a formyl group to the free amino group of methionyl-tRNA(fMet). The formyl group appears to play a dual role in the initiator identity of N-formylmethionyl-tRNA by promoting its recognition by IF2 and preventing the misappropriation of this tRNA by the elongation apparatus. The protein is Methionyl-tRNA formyltransferase of Campylobacter jejuni subsp. doylei (strain ATCC BAA-1458 / RM4099 / 269.97).